The sequence spans 952 residues: Calsyntenin-1 (952 aa).

Residues 1–28 (MLRRPAPALARAVRLLLAGLLYGGGVWA) form the signal peptide. At 29–830 (ARVNKHKPWL…PHPFAVVPST (802 aa)) the chain is on the extracellular side. 2 consecutive Cadherin domains span residues 38–154 (LEPT…APVF) and 155–255 (KEKS…SPGW). Asparagine 356 carries N-linked (GlcNAc...) asparagine glycosylation. The helical transmembrane segment at 831–851 (ATVVIVVCVSFLVFMIILGVF) threads the bilayer. The Cytoplasmic segment spans residues 852-952 (RIRAAHQRTM…LEWDYSTLSY (101 aa)). Residues 886–952 (METYEDQHSS…LEWDYSTLSY (67 aa)) form a disordered region. Acidic residues predominate over residues 896 to 930 (EEEEEEEEEEESEDGEEEEDITSAESESSEEEEGG). Polar residues predominate over residues 934-952 (GQNTTRQQQLEWDYSTLSY).

The protein belongs to the calsyntenin family. Directly interacts with APBA2. Forms a tripartite complex with APBA2 and APP. Interacts with KLC1. As to quaternary structure, interacts with APBB1; this interaction stabilizes AlcICD metabolism. In terms of assembly, interacts with PSEN1. In terms of processing, proteolytically processed under normal cellular conditions. A primary zeta-cleavage generates a large extracellular (soluble) N-terminal domain (sAlc) and a short C-terminal transmembrane fragment (CTF1). A secondary cleavage catalyzed by presenilin gamma-secretase within the transmembrane domain releases the beta-Alc-alpha chain in the extracellular milieu and produces an intracellular fragment (AlcICD). This processing is strongly suppressed in the tripartite complex formed with APBA2 and APP, which seems to prevent the association with PSEN1. Preferentially expressed in the retina and brain.

The protein localises to the postsynaptic cell membrane. Its subcellular location is the endoplasmic reticulum membrane. It is found in the golgi apparatus membrane. The protein resides in the cell projection. It localises to the neuron projection. The protein localises to the nucleus. Functionally, postsynaptic adhesion molecule that binds to presynaptic neurexins to mediate both excitatory and inhibitory synapse formation. Promotes synapse development by acting as a cell adhesion molecule at the postsynaptic membrane, which associates with neurexin-alpha at the presynaptic membrane. Also functions as a cargo in axonal anterograde transport by acting as a molecular adapter that promotes KLC1 association with vesicles. Complex formation with APBA2 and APP, stabilizes APP metabolism and enhances APBA2-mediated suppression of beta-APP40 secretion, due to the retardation of intracellular APP maturation. In terms of biological role, as intracellular fragment AlcICD, suppresses APBB1-dependent transactivation stimulated by APP C-terminal intracellular fragment (AICD), most probably by competing with AICD for APBB1-binding. In complex with APBA2 and C99, a C-terminal APP fragment, abolishes C99 interaction with PSEN1 and thus APP C99 cleavage by gamma-secretase, most probably through stabilization of the direct interaction between APBA2 and APP. The protein is Calsyntenin-1 (Clstn1) of Rattus norvegicus (Rat).